The primary structure comprises 366 residues: Histidinol-phosphate aminotransferase (366 aa).

Lys226 carries the post-translational modification N6-(pyridoxal phosphate)lysine.

This sequence belongs to the class-II pyridoxal-phosphate-dependent aminotransferase family. Histidinol-phosphate aminotransferase subfamily. Requires pyridoxal 5'-phosphate as cofactor.

It carries out the reaction L-histidinol phosphate + 2-oxoglutarate = 3-(imidazol-4-yl)-2-oxopropyl phosphate + L-glutamate. It functions in the pathway amino-acid biosynthesis; L-histidine biosynthesis; L-histidine from 5-phospho-alpha-D-ribose 1-diphosphate: step 7/9. The polypeptide is Histidinol-phosphate aminotransferase (Methanosarcina barkeri (strain Fusaro / DSM 804)).